The sequence spans 310 residues: MTEQILERTKAQQYNFNKLQKRIRRNTGQAIADFNMIEDGDRIMVCLSGGKDSFTMLDILMSLQKSAPISFSLVAVNLDQKQPGFPAHVLPEYLESLGVEYKIVEEDTYSIVQDKIPEGKTTCSLCSRLRRGILYRTAKELGATKIALGHHRDDILETLFLNMFYGGKMKGMPPKLVSDNGEHVVIRPLAYCREKDIIKYSDMAGYPIIPCNLCGSQPNLQRQNIKQMLNDWDKRFPGRIETMFRAMQNVVPSHLADFELFDFKSINKDSGVINGGDIGFDKEEMPVATVEDEDMVQEFDPSLKLDVTNI.

Residues 48 to 53 (SGGKDS) carry the PP-loop motif motif. 3 residues coordinate [4Fe-4S] cluster: C123, C126, and C214.

It belongs to the TtcA family. Homodimer. It depends on Mg(2+) as a cofactor. [4Fe-4S] cluster serves as cofactor.

The protein localises to the cytoplasm. The catalysed reaction is cytidine(32) in tRNA + S-sulfanyl-L-cysteinyl-[cysteine desulfurase] + AH2 + ATP = 2-thiocytidine(32) in tRNA + L-cysteinyl-[cysteine desulfurase] + A + AMP + diphosphate + H(+). It participates in tRNA modification. In terms of biological role, catalyzes the ATP-dependent 2-thiolation of cytidine in position 32 of tRNA, to form 2-thiocytidine (s(2)C32). The sulfur atoms are provided by the cysteine/cysteine desulfurase (IscS) system. The sequence is that of tRNA-cytidine(32) 2-sulfurtransferase from Vibrio vulnificus (strain YJ016).